Reading from the N-terminus, the 184-residue chain is Ribosome-recycling factor (184 aa).

Belongs to the RRF family.

It localises to the cytoplasm. Responsible for the release of ribosomes from messenger RNA at the termination of protein biosynthesis. May increase the efficiency of translation by recycling ribosomes from one round of translation to another. The chain is Ribosome-recycling factor from Onion yellows phytoplasma (strain OY-M).